The chain runs to 327 residues: GMP reductase (327 aa).

Residue Cys-176 is the Thioimidate intermediate of the active site. 205-228 provides a ligand contact to NADP(+); it reads IIADGGIRTHGDIAKSIRFGASMV.

This sequence belongs to the IMPDH/GMPR family. GuaC type 2 subfamily.

It catalyses the reaction IMP + NH4(+) + NADP(+) = GMP + NADPH + 2 H(+). Catalyzes the irreversible NADPH-dependent deamination of GMP to IMP. It functions in the conversion of nucleobase, nucleoside and nucleotide derivatives of G to A nucleotides, and in maintaining the intracellular balance of A and G nucleotides. This Streptococcus pyogenes serotype M5 (strain Manfredo) protein is GMP reductase.